Consider the following 120-residue polypeptide: Large ribosomal subunit protein uL18c (120 aa).

This sequence belongs to the universal ribosomal protein uL18 family. In terms of assembly, part of the 50S ribosomal subunit; contacts the 5S rRNA.

It localises to the plastid. It is found in the chloroplast. In terms of biological role, binds 5S rRNA, forms part of the central protuberance of the 50S subunit. The polypeptide is Large ribosomal subunit protein uL18c (rpl18) (Pyropia yezoensis (Susabi-nori)).